The primary structure comprises 221 residues: D-glycero-alpha-D-manno-heptose 1-phosphate guanylyltransferase (221 aa).

The protein belongs to the D-alpha-D-heptose-1-P guanylyltransferase family.

It carries out the reaction D-glycero-alpha-D-manno-heptose 1-phosphate + GTP + H(+) = GDP-D-glycero-alpha-D-manno-heptose + diphosphate. It participates in nucleotide-sugar biosynthesis; GDP-D-glycero-alpha-D-manno-heptose biosynthesis; GDP-D-glycero-alpha-D-manno-heptose from D-glycero-alpha-D-manno-heptose 7-phosphate: step 3/3. The protein operates within capsule biogenesis; capsule polysaccharide biosynthesis. In terms of biological role, catalyzes the GDP transfer from GTP to D-glycero-alpha-D-manno-heptose 1-phosphate, yielding GDP-D-alpha-D-heptose. Is able to use ATP, CTP or UTP as substrate in the presence of pyrophosphatase, but at a significantly slower rate. Can also form GDP-alpha-D-mannose from alpha-D-mannose 1-phosphate and GTP. This Campylobacter jejuni subsp. jejuni serotype O:2 (strain ATCC 700819 / NCTC 11168) protein is D-glycero-alpha-D-manno-heptose 1-phosphate guanylyltransferase.